Reading from the N-terminus, the 118-residue chain is Putative membrane protein insertion efficiency factor (118 aa).

The protein belongs to the UPF0161 family.

It is found in the cell inner membrane. In terms of biological role, could be involved in insertion of integral membrane proteins into the membrane. The polypeptide is Putative membrane protein insertion efficiency factor (Helicobacter pylori (strain P12)).